A 314-amino-acid chain; its full sequence is Carbamate kinase (314 aa).

It belongs to the carbamate kinase family. As to quaternary structure, homodimer.

The enzyme catalyses hydrogencarbonate + NH4(+) + ATP = carbamoyl phosphate + ADP + H2O + H(+). Its pathway is metabolic intermediate metabolism; carbamoyl phosphate degradation; CO(2) and NH(3) from carbamoyl phosphate: step 1/1. This is Carbamate kinase (CBK) from Trichomonas vaginalis.